Here is a 335-residue protein sequence, read N- to C-terminus: Phosphate acyltransferase (335 aa).

This sequence belongs to the PlsX family. Homodimer. Probably interacts with PlsY.

It localises to the cytoplasm. The catalysed reaction is a fatty acyl-[ACP] + phosphate = an acyl phosphate + holo-[ACP]. It functions in the pathway lipid metabolism; phospholipid metabolism. Its function is as follows. Catalyzes the reversible formation of acyl-phosphate (acyl-PO(4)) from acyl-[acyl-carrier-protein] (acyl-ACP). This enzyme utilizes acyl-ACP as fatty acyl donor, but not acyl-CoA. The chain is Phosphate acyltransferase from Streptococcus suis (strain 98HAH33).